The primary structure comprises 812 residues: Mitochondrial intermediate peptidase (812 aa).

The transit peptide at 1 to 35 directs the protein to the mitochondrion; it reads MLKLLRPRPWVCNSCLNRVAFPKPYPVGSRSTRWL. The disordered stretch occupies residues 518–544; the sequence is STSEGGPAFGSPESAANDGMAASRGAS. H587 provides a ligand contact to Zn(2+). Residue E588 is part of the active site. Zn(2+) is bound by residues H591 and H594.

This sequence belongs to the peptidase M3 family. The cofactor is Zn(2+).

Its subcellular location is the mitochondrion matrix. The enzyme catalyses Release of an N-terminal octapeptide as second stage of processing of some proteins imported into the mitochondrion.. Cleaves proteins, imported into the mitochondrion, to their mature size. While most mitochondrial precursor proteins are processed to the mature form in one step by mitochondrial processing peptidase (MPP), the sequential cleavage by MIP of an octapeptide after initial processing by MPP is a required step for a subgroup of nuclear-encoded precursor proteins destined for the matrix or the inner membrane. The chain is Mitochondrial intermediate peptidase (OCT1) from Pyricularia oryzae (strain 70-15 / ATCC MYA-4617 / FGSC 8958) (Rice blast fungus).